A 337-amino-acid polypeptide reads, in one-letter code: DNA-directed RNA polymerase subunit alpha (337 aa).

Residues 1-233 are alpha N-terminal domain (alpha-NTD); the sequence is MIQKNWQELI…DQLAIFVNFE (233 aa). Residues 249 to 337 form an alpha C-terminal domain (alpha-CTD) region; it reads FNPALLKKVD…DLAKRYEDQY (89 aa).

The protein belongs to the RNA polymerase alpha chain family. In terms of assembly, homodimer. The RNAP catalytic core consists of 2 alpha, 1 beta, 1 beta' and 1 omega subunit. When a sigma factor is associated with the core the holoenzyme is formed, which can initiate transcription.

It carries out the reaction RNA(n) + a ribonucleoside 5'-triphosphate = RNA(n+1) + diphosphate. DNA-dependent RNA polymerase catalyzes the transcription of DNA into RNA using the four ribonucleoside triphosphates as substrates. The chain is DNA-directed RNA polymerase subunit alpha from Brucella anthropi (strain ATCC 49188 / DSM 6882 / CCUG 24695 / JCM 21032 / LMG 3331 / NBRC 15819 / NCTC 12168 / Alc 37) (Ochrobactrum anthropi).